A 425-amino-acid polypeptide reads, in one-letter code: Tyrosine--tRNA ligase (425 aa).

Y34 serves as a coordination point for L-tyrosine. Positions P39 to N48 match the 'HIGH' region motif. Residues Y171 and Q175 each contribute to the L-tyrosine site. The 'KMSKS' region motif lies at K231–S235. Residue K234 coordinates ATP. The 67-residue stretch at A358–I424 folds into the S4 RNA-binding domain.

This sequence belongs to the class-I aminoacyl-tRNA synthetase family. TyrS type 1 subfamily. In terms of assembly, homodimer.

It localises to the cytoplasm. The enzyme catalyses tRNA(Tyr) + L-tyrosine + ATP = L-tyrosyl-tRNA(Tyr) + AMP + diphosphate + H(+). Its function is as follows. Catalyzes the attachment of tyrosine to tRNA(Tyr) in a two-step reaction: tyrosine is first activated by ATP to form Tyr-AMP and then transferred to the acceptor end of tRNA(Tyr). The protein is Tyrosine--tRNA ligase of Opitutus terrae (strain DSM 11246 / JCM 15787 / PB90-1).